A 471-amino-acid chain; its full sequence is Adenosylhomocysteinase (471 aa).

3 residues coordinate substrate: threonine 60, aspartate 135, and glutamate 196. An NAD(+)-binding site is contributed by 197–199 (TTT). Positions 226 and 230 each coordinate substrate. NAD(+) contacts are provided by residues asparagine 231, 260-265 (GYGDVG), glutamate 283, asparagine 318, 339-341 (IGH), and asparagine 387.

This sequence belongs to the adenosylhomocysteinase family. NAD(+) serves as cofactor.

The protein localises to the cytoplasm. It catalyses the reaction S-adenosyl-L-homocysteine + H2O = L-homocysteine + adenosine. It participates in amino-acid biosynthesis; L-homocysteine biosynthesis; L-homocysteine from S-adenosyl-L-homocysteine: step 1/1. Its function is as follows. May play a key role in the regulation of the intracellular concentration of adenosylhomocysteine. This chain is Adenosylhomocysteinase, found in Chlorobium phaeobacteroides (strain DSM 266 / SMG 266 / 2430).